Consider the following 334-residue polypeptide: Malate dehydrogenase (334 aa).

Position 17–23 (G17–G23) interacts with NAD(+). The substrate site is built by R98 and R104. NAD(+) contacts are provided by residues N111, Q118, and V135–N137. Positions 137 and 168 each coordinate substrate. H193 (proton acceptor) is an active-site residue.

It belongs to the LDH/MDH superfamily. MDH type 2 family.

The catalysed reaction is (S)-malate + NAD(+) = oxaloacetate + NADH + H(+). In terms of biological role, catalyzes the reversible oxidation of malate to oxaloacetate. The sequence is that of Malate dehydrogenase from Deinococcus geothermalis (strain DSM 11300 / CIP 105573 / AG-3a).